We begin with the raw amino-acid sequence, 421 residues long: Phosphatidate cytidylyltransferase 1 (421 aa).

Position 1 is an N-acetylmethionine (M1). The span at 1 to 12 (MEEENVTSSPST) shows a compositional bias: polar residues. A disordered region spans residues 1 to 26 (MEEENVTSSPSTPVHRLRHRRRSNEV). A run of 8 helical transmembrane segments spans residues 60–80 (IGGF…MVVV), 102–122 (LPYI…FVYG), 149–169 (YHMA…ILTL), 183–203 (WTHM…ANIF), 206–226 (IFWF…AYIF), 246–266 (GFIG…NILG), 321–341 (LCLG…ASGF), and 369–389 (VMAV…SVSV).

This sequence belongs to the CDS family. The cofactor is Mg(2+).

The protein localises to the membrane. It carries out the reaction a 1,2-diacyl-sn-glycero-3-phosphate + CTP + H(+) = a CDP-1,2-diacyl-sn-glycerol + diphosphate. It participates in phospholipid metabolism; CDP-diacylglycerol biosynthesis; CDP-diacylglycerol from sn-glycerol 3-phosphate: step 3/3. Its function is as follows. May be involved in the synthesis of minor phospholipids and in modulation of IP3-mediated signal transduction. This is Phosphatidate cytidylyltransferase 1 from Arabidopsis thaliana (Mouse-ear cress).